Here is a 486-residue protein sequence, read N- to C-terminus: Ribosomal RNA small subunit methyltransferase F (486 aa).

Residues 124 to 130 (ASAPGSK), Glu-148, Asp-175, and Asp-193 each bind S-adenosyl-L-methionine. Cys-246 (nucleophile) is an active-site residue.

It belongs to the class I-like SAM-binding methyltransferase superfamily. RsmB/NOP family.

It is found in the cytoplasm. It catalyses the reaction cytidine(1407) in 16S rRNA + S-adenosyl-L-methionine = 5-methylcytidine(1407) in 16S rRNA + S-adenosyl-L-homocysteine + H(+). Functionally, specifically methylates the cytosine at position 1407 (m5C1407) of 16S rRNA. This chain is Ribosomal RNA small subunit methyltransferase F, found in Shewanella baltica (strain OS223).